The primary structure comprises 343 residues: L-rhamnose-proton symporter (343 aa).

The next 10 helical transmembrane spans lie at Ala4 to Ala24, Trp38 to Leu58, Phe68 to Ile88, Met101 to Leu121, Thr137 to Leu157, Leu175 to Ala195, Ile207 to Ile227, Leu254 to Phe274, Met289 to Leu309, and Val320 to Gly340.

It belongs to the L-rhamnose transporter (TC 2.A.7.6) family.

Its subcellular location is the cell inner membrane. It catalyses the reaction L-rhamnopyranose(in) + H(+)(in) = L-rhamnopyranose(out) + H(+)(out). In terms of biological role, uptake of L-rhamnose across the cytoplasmic membrane with the concomitant transport of protons into the cell (symport system). The sequence is that of L-rhamnose-proton symporter from Yersinia pestis bv. Antiqua (strain Antiqua).